Here is a 168-residue protein sequence, read N- to C-terminus: Crossover junction endodeoxyribonuclease RuvC (168 aa).

Catalysis depends on residues Asp7, Glu66, and Asp138. The Mg(2+) site is built by Asp7, Glu66, and Asp138.

Belongs to the RuvC family. As to quaternary structure, homodimer which binds Holliday junction (HJ) DNA. The HJ becomes 2-fold symmetrical on binding to RuvC with unstacked arms; it has a different conformation from HJ DNA in complex with RuvA. In the full resolvosome a probable DNA-RuvA(4)-RuvB(12)-RuvC(2) complex forms which resolves the HJ. It depends on Mg(2+) as a cofactor.

It localises to the cytoplasm. It carries out the reaction Endonucleolytic cleavage at a junction such as a reciprocal single-stranded crossover between two homologous DNA duplexes (Holliday junction).. In terms of biological role, the RuvA-RuvB-RuvC complex processes Holliday junction (HJ) DNA during genetic recombination and DNA repair. Endonuclease that resolves HJ intermediates. Cleaves cruciform DNA by making single-stranded nicks across the HJ at symmetrical positions within the homologous arms, yielding a 5'-phosphate and a 3'-hydroxyl group; requires a central core of homology in the junction. The consensus cleavage sequence is 5'-(A/T)TT(C/G)-3'. Cleavage occurs on the 3'-side of the TT dinucleotide at the point of strand exchange. HJ branch migration catalyzed by RuvA-RuvB allows RuvC to scan DNA until it finds its consensus sequence, where it cleaves and resolves the cruciform DNA. The polypeptide is Crossover junction endodeoxyribonuclease RuvC (Cereibacter sphaeroides (strain ATCC 17023 / DSM 158 / JCM 6121 / CCUG 31486 / LMG 2827 / NBRC 12203 / NCIMB 8253 / ATH 2.4.1.) (Rhodobacter sphaeroides)).